Consider the following 621-residue polypeptide: GPI-anchor transamidase component GPAA1 (621 aa).

The Cytoplasmic portion of the chain corresponds to 1–19 (MGLLSDPVRRRALARIVLR). The chain crosses the membrane as a helical span at residues 20 to 41 (LNTPLCVLSYVAGIAWFLALAF). The Lumenal segment spans residues 42 to 370 (PPLTQRTYMS…LLPALSRFVS (329 aa)). The a 2-acyl-6-[6-phosphoethanolamine-alpha-D-mannosyl-(1-&gt;2)-6-phosphoethanolamine-alpha-D-mannosyl-(1-&gt;6)-2-phosphoethanolamine-alpha-D-mannosyl-(1-&gt;4)-alpha-D-glucosaminyl]-1-(1-radyl,2-acyl-sn-glycero-3-phospho)-1D-myo-inositol site is built by Tyr-49 and Ser-51. N-linked (GlcNAc...) asparagine glycosylation occurs at Asn-203. Cys-259 and Cys-266 are oxidised to a cystine. His-354, Gln-355, and Ser-356 together coordinate a 2-acyl-6-[6-phosphoethanolamine-alpha-D-mannosyl-(1-&gt;2)-6-phosphoethanolamine-alpha-D-mannosyl-(1-&gt;6)-2-phosphoethanolamine-alpha-D-mannosyl-(1-&gt;4)-alpha-D-glucosaminyl]-1-(1-radyl,2-acyl-sn-glycero-3-phospho)-1D-myo-inositol. Gln-355 is a Mg(2+) binding site. The helical transmembrane segment at 371–393 (IGLYMPATGFLLLVLGLKALELW) threads the bilayer. The Cytoplasmic segment spans residues 394–425 (MQLHQAGVNPEEAGKAPSPGTPLLPTQGVGLA). A helical transmembrane segment spans residues 426 to 450 (SLTAPLLISQAMGLALYFLPVLGQH). Over 451 to 462 (LATQHFPVAEAE) the chain is Lumenal. A helical transmembrane segment spans residues 463-483 (AVVLTLLAIYVAGLALPHNTH). Residues 484–495 (RVVNSQVPDRGW) are Cytoplasmic-facing. Helical transmembrane passes span 496-519 (MALK…LNFS) and 520-536 (LGFL…ALAK). Over 537–540 (PHGP) the chain is Cytoplasmic. A helical membrane pass occupies residues 541–563 (RTLYAALLVVTSPAVTLFGSLFL). The Lumenal portion of the chain corresponds to 564 to 597 (WRELLEVPLSLAEGWQLFLTALAQGVLEHYTYGA). Residues 598–619 (LLFPILALGLYPCWLLFWNVLF) traverse the membrane as a helical segment. The Cytoplasmic portion of the chain corresponds to 620 to 621 (WK).

In terms of assembly, heteropentamer. Part of the GPI-anchor transamidase complex, consisting of PIGK, PIGT, PIGS, PIGU and GAA1. Interacts with PIGK. Ubiquitously expressed in fetal and adult tissues. Expressed at higher levels in fetal tissues than adult tissues. In embryos abundant in the choroid plexus, skeletal muscle,.

It localises to the endoplasmic reticulum membrane. It functions in the pathway glycolipid biosynthesis; glycosylphosphatidylinositol-anchor biosynthesis. Its function is as follows. Component of the glycosylphosphatidylinositol-anchor (GPI-anchor) transamidase (GPI-T) complex that catalyzes the formation of the linkage between a proprotein and a GPI-anchor and participates in GPI anchored protein biosynthesis. Binds GPI-anchor. This chain is GPI-anchor transamidase component GPAA1, found in Mus musculus (Mouse).